Consider the following 226-residue polypeptide: DNA mismatch repair protein MutH (226 aa).

The protein belongs to the MutH family.

It localises to the cytoplasm. Sequence-specific endonuclease that cleaves unmethylated GATC sequences. It is involved in DNA mismatch repair. In Vibrio parahaemolyticus serotype O3:K6 (strain RIMD 2210633), this protein is DNA mismatch repair protein MutH.